Here is a 427-residue protein sequence, read N- to C-terminus: Serine--tRNA ligase (427 aa).

229–231 (TAE) lines the L-serine pocket. 260 to 262 (RSE) provides a ligand contact to ATP. Glu-283 serves as a coordination point for L-serine. 347–350 (EISS) is an ATP binding site. Ser-383 contributes to the L-serine binding site.

Belongs to the class-II aminoacyl-tRNA synthetase family. Type-1 seryl-tRNA synthetase subfamily. Homodimer. The tRNA molecule binds across the dimer.

The protein resides in the cytoplasm. It catalyses the reaction tRNA(Ser) + L-serine + ATP = L-seryl-tRNA(Ser) + AMP + diphosphate + H(+). It carries out the reaction tRNA(Sec) + L-serine + ATP = L-seryl-tRNA(Sec) + AMP + diphosphate + H(+). The protein operates within aminoacyl-tRNA biosynthesis; selenocysteinyl-tRNA(Sec) biosynthesis; L-seryl-tRNA(Sec) from L-serine and tRNA(Sec): step 1/1. Functionally, catalyzes the attachment of serine to tRNA(Ser). Is also able to aminoacylate tRNA(Sec) with serine, to form the misacylated tRNA L-seryl-tRNA(Sec), which will be further converted into selenocysteinyl-tRNA(Sec). The protein is Serine--tRNA ligase of Oleidesulfovibrio alaskensis (strain ATCC BAA-1058 / DSM 17464 / G20) (Desulfovibrio alaskensis).